The chain runs to 515 residues: Galactose/methyl galactoside import ATP-binding protein MglA (515 aa).

2 consecutive ABC transporter domains span residues 8-243 (LEMR…VGRE) and 254-499 (IPKE…AKYL). ATP is bound at residue 40–47 (GENGAGKS).

It belongs to the ABC transporter superfamily. Galactose/methyl galactoside importer (TC 3.A.1.2.3) family. As to quaternary structure, the complex is composed of one ATP-binding protein (MglA), two transmembrane proteins (MglC) and a solute-binding protein (MglB).

It localises to the cell membrane. It catalyses the reaction D-galactose(out) + ATP + H2O = D-galactose(in) + ADP + phosphate + H(+). It carries out the reaction methyl beta-D-galactoside(out) + ATP + H2O = methyl beta-D-galactoside(in) + ADP + phosphate + H(+). Functionally, part of the ABC transporter complex MglABC involved in galactose/methyl galactoside import. Responsible for energy coupling to the transport system. The chain is Galactose/methyl galactoside import ATP-binding protein MglA from Clostridium perfringens (strain 13 / Type A).